The following is a 727-amino-acid chain: 1,4-alpha-glucan branching enzyme GlgB (727 aa).

The active-site Nucleophile is D405. The active-site Proton donor is E458.

This sequence belongs to the glycosyl hydrolase 13 family. GlgB subfamily. Monomer.

The enzyme catalyses Transfers a segment of a (1-&gt;4)-alpha-D-glucan chain to a primary hydroxy group in a similar glucan chain.. The protein operates within glycan biosynthesis; glycogen biosynthesis. Functionally, catalyzes the formation of the alpha-1,6-glucosidic linkages in glycogen by scission of a 1,4-alpha-linked oligosaccharide from growing alpha-1,4-glucan chains and the subsequent attachment of the oligosaccharide to the alpha-1,6 position. The sequence is that of 1,4-alpha-glucan branching enzyme GlgB from Yersinia pseudotuberculosis serotype O:1b (strain IP 31758).